A 163-amino-acid polypeptide reads, in one-letter code: ATP synthase subunit b', chloroplastic (163 aa).

Residues 26-46 (ATLPLMALQFILLTVILTFVF) traverse the membrane as a helical segment.

It belongs to the ATPase B chain family. As to quaternary structure, F-type ATPases have 2 components, F(1) - the catalytic core - and F(0) - the membrane proton channel. F(1) has five subunits: alpha(3), beta(3), gamma(1), delta(1), epsilon(1). F(0) has four main subunits: a(1), b(1), b'(1) and c(10-14). The alpha and beta chains form an alternating ring which encloses part of the gamma chain. F(1) is attached to F(0) by a central stalk formed by the gamma and epsilon chains, while a peripheral stalk is formed by the delta, b and b' chains.

It localises to the plastid. Its subcellular location is the chloroplast thylakoid membrane. Its function is as follows. F(1)F(0) ATP synthase produces ATP from ADP in the presence of a proton or sodium gradient. F-type ATPases consist of two structural domains, F(1) containing the extramembraneous catalytic core and F(0) containing the membrane proton channel, linked together by a central stalk and a peripheral stalk. During catalysis, ATP synthesis in the catalytic domain of F(1) is coupled via a rotary mechanism of the central stalk subunits to proton translocation. In terms of biological role, component of the F(0) channel, it forms part of the peripheral stalk, linking F(1) to F(0). The b'-subunit is a diverged and duplicated form of b found in plants and photosynthetic bacteria. This chain is ATP synthase subunit b', chloroplastic, found in Ochrosphaera neapolitana.